The primary structure comprises 171 residues: Ponticulin-like protein F (171 aa).

Positions 1 to 20 are cleaved as a signal peptide; the sequence is MKFIPALIIFVFTIFALTNS. Residue glycine 149 is the site of GPI-like-anchor amidated glycine attachment. The propeptide at 150–171 is removed in mature form; that stretch reads TSSTIVIPFALILSLLLSVITL.

Belongs to the ponticulin family. The GPI-like-anchor contains a phosphoceramide group, rather than a phosphatidyl group.

Its subcellular location is the cell membrane. The chain is Ponticulin-like protein F (ponF) from Dictyostelium discoideum (Social amoeba).